Here is a 24-residue protein sequence, read N- to C-terminus: Superoxide dismutase [Cu-Zn] (24 aa).

Belongs to the Cu-Zn superoxide dismutase family. Homodimer. Requires Cu cation as cofactor. The cofactor is Zn(2+).

The protein localises to the cytoplasm. It catalyses the reaction 2 superoxide + 2 H(+) = H2O2 + O2. Destroys radicals which are normally produced within the cells and which are toxic to biological systems. This Aquarana catesbeiana (American bullfrog) protein is Superoxide dismutase [Cu-Zn] (sod1).